The following is a 156-amino-acid chain: Arginine repressor (156 aa).

The protein belongs to the ArgR family.

It localises to the cytoplasm. It participates in amino-acid biosynthesis; L-arginine biosynthesis [regulation]. Regulates arginine biosynthesis genes. The protein is Arginine repressor of Vibrio cholerae serotype O1 (strain ATCC 39315 / El Tor Inaba N16961).